The chain runs to 275 residues: Glucosamine-6-phosphate deaminase 2 (275 aa).

The active-site Proton acceptor; for enolization step is the aspartate 72. Residues 102–131 (NNAHILDGNASDLQAECEDFERKIKEAGGI) adopt a coiled-coil conformation. The active-site For ring-opening step is the aspartate 141. Histidine 143 serves as the catalytic Proton acceptor; for ring-opening step. Glutamate 148 serves as the catalytic For ring-opening step.

Belongs to the glucosamine/galactosamine-6-phosphate isomerase family. As to quaternary structure, homohexamer.

It is found in the cytoplasm. The enzyme catalyses alpha-D-glucosamine 6-phosphate + H2O = beta-D-fructose 6-phosphate + NH4(+). In terms of biological role, catalyzes the reversible conversion of alpha-D-glucosamine 6-phosphate (GlcN-6P) into beta-D-fructose 6-phosphate (Fru-6P) and ammonium ion, a regulatory reaction step in de novo uridine diphosphate-N-acetyl-alpha-D-glucosamine (UDP-GlcNAc) biosynthesis via hexosamine pathway. The polypeptide is Glucosamine-6-phosphate deaminase 2 (Xenopus laevis (African clawed frog)).